The sequence spans 342 residues: L-threonine 3-dehydrogenase (342 aa).

Cysteine 38 provides a ligand contact to Zn(2+). Active-site charge relay system residues include threonine 40 and histidine 43. Residues histidine 63, glutamate 64, cysteine 93, cysteine 96, cysteine 99, and cysteine 107 each coordinate Zn(2+). NAD(+) is bound by residues isoleucine 175, aspartate 195, arginine 200, 262–264, and 286–287; these read LGI and IY.

It belongs to the zinc-containing alcohol dehydrogenase family. In terms of assembly, homotetramer. It depends on Zn(2+) as a cofactor.

Its subcellular location is the cytoplasm. It carries out the reaction L-threonine + NAD(+) = (2S)-2-amino-3-oxobutanoate + NADH + H(+). It participates in amino-acid degradation; L-threonine degradation via oxydo-reductase pathway; glycine from L-threonine: step 1/2. Its function is as follows. Catalyzes the NAD(+)-dependent oxidation of L-threonine to 2-amino-3-ketobutyrate. The polypeptide is L-threonine 3-dehydrogenase (Burkholderia lata (strain ATCC 17760 / DSM 23089 / LMG 22485 / NCIMB 9086 / R18194 / 383)).